A 542-amino-acid polypeptide reads, in one-letter code: GMP synthase [glutamine-hydrolyzing] (542 aa).

Residues Met28–Thr218 enclose the Glutamine amidotransferase type-1 domain. The Nucleophile role is filled by Cys105. Residues His192 and Glu194 contribute to the active site. Positions Trp219–Arg417 constitute a GMPS ATP-PPase domain. Ser246–Ser252 contacts ATP.

As to quaternary structure, homodimer.

The enzyme catalyses XMP + L-glutamine + ATP + H2O = GMP + L-glutamate + AMP + diphosphate + 2 H(+). Its pathway is purine metabolism; GMP biosynthesis; GMP from XMP (L-Gln route): step 1/1. Its function is as follows. Catalyzes the synthesis of GMP from XMP. The protein is GMP synthase [glutamine-hydrolyzing] of Gloeothece citriformis (strain PCC 7424) (Cyanothece sp. (strain PCC 7424)).